Here is a 166-residue protein sequence, read N- to C-terminus: Mitochondrial fission process protein 1 (166 aa).

2 helical membrane-spanning segments follow: residues Ser-34–Ala-54 and Ala-78–Phe-98. Residue Lys-123 is modified to N6-succinyllysine. Residues Leu-129–Leu-149 traverse the membrane as a helical segment.

It belongs to the MTFP1 family.

The protein localises to the mitochondrion inner membrane. In terms of biological role, involved in the mitochondrial division probably by regulating membrane fission. Loss-of-function leads to apoptosis. The protein is Mitochondrial fission process protein 1 (Mtfp1) of Mus musculus (Mouse).